Reading from the N-terminus, the 452-residue chain is Flavin-containing monooxygenase FMO GS-OX-like 4 (452 aa).

Glycine 17–glycine 22 contributes to the FAD binding site. Residue glycine 217 to alanine 222 coordinates NADP(+).

The protein belongs to the FMO family. FAD is required as a cofactor.

Its function is as follows. Catalyzes the conversion of methylthioalkyl glucosinolates of any chain length into methylsulfinylalkyl glucosinolates. The chain is Flavin-containing monooxygenase FMO GS-OX-like 4 from Arabidopsis thaliana (Mouse-ear cress).